The primary structure comprises 145 residues: Class I hydrophobin 1 (145 aa).

The first 19 residues, 1-19 (MKFSYAIAAVVAAAASVQA), serve as a signal peptide directing secretion. 4 cysteine pairs are disulfide-bonded: Cys-65-Cys-126, Cys-72-Cys-120, Cys-73-Cys-106, and Cys-127-Cys-140. Residues Asn-80 and Asn-129 are each glycosylated (N-linked (GlcNAc...) asparagine).

This sequence belongs to the fungal hydrophobin family. As to quaternary structure, self-assembles to form functional amyloid fibrils called rodlets. Self-assembly into fibrillar rodlets occurs spontaneously at hydrophobic:hydrophilic interfaces and the rodlets further associate laterally to form amphipathic monolayers.

Its subcellular location is the secreted. It is found in the cell wall. Aerial growth, conidiation, and dispersal of filamentous fungi in the environment rely upon a capability of their secreting small amphipathic proteins called hydrophobins (HPBs) with low sequence identity. Class I can self-assemble into an outermost layer of rodlet bundles on aerial cell surfaces, conferring cellular hydrophobicity that supports fungal growth, development and dispersal; whereas Class II form highly ordered films at water-air interfaces through intermolecular interactions but contribute nothing to the rodlet structure. Hyd1 is a class I hydrophobin that is crucial for the initiation of primordia formation. Plays also important roles in nitrogen regulation and resistance to abiotic stresses. In Ganoderma lucidum (Ling zhi medicinal fungus), this protein is Class I hydrophobin 1.